Consider the following 347-residue polypeptide: Homocysteine S-methyltransferase 3 (347 aa).

In terms of domain architecture, Hcy-binding spans 12–333 (LMTDFLEKCG…NTIRAIAKVL (322 aa)). Cys251, Cys318, and Cys319 together coordinate Zn(2+).

Monomer. It depends on Zn(2+) as a cofactor. In terms of tissue distribution, expressed predominantly in rosette leaves. Expressed in roots, cauline leaves and developing seeds.

The catalysed reaction is S-methyl-L-methionine + L-homocysteine = 2 L-methionine + H(+). Functionally, catalyzes methyl transfer from S-methylmethionine (SMM) to adenosyl-L-homocysteine (AdoMet). SMM degradation (by HMT-1, HMT-2 and HMT-3) and biosynthesis (by MMT1) constitute the SMM cycle in plants, which is probably required to achieve short term control of AdoMet level. The polypeptide is Homocysteine S-methyltransferase 3 (HMT3) (Arabidopsis thaliana (Mouse-ear cress)).